The chain runs to 693 residues: Elongation factor G (693 aa).

In terms of domain architecture, tr-type G spans 9–283 (ERVRNIGIIA…AVCDYLPSPL (275 aa)). GTP contacts are provided by residues 18–25 (AHIDAGKT), 82–86 (DTPGH), and 136–139 (NKMD).

This sequence belongs to the TRAFAC class translation factor GTPase superfamily. Classic translation factor GTPase family. EF-G/EF-2 subfamily.

The protein localises to the cytoplasm. In terms of biological role, catalyzes the GTP-dependent ribosomal translocation step during translation elongation. During this step, the ribosome changes from the pre-translocational (PRE) to the post-translocational (POST) state as the newly formed A-site-bound peptidyl-tRNA and P-site-bound deacylated tRNA move to the P and E sites, respectively. Catalyzes the coordinated movement of the two tRNA molecules, the mRNA and conformational changes in the ribosome. In Dehalococcoides mccartyi (strain ATCC BAA-2100 / JCM 16839 / KCTC 5957 / BAV1), this protein is Elongation factor G.